The following is an 822-amino-acid chain: ATP-dependent zinc metalloprotease FTSH 8, mitochondrial (822 aa).

Residues 1-25 show a composition bias toward low complexity; sequence MSLASLARALSRRSAPSSSRARQGF. Disordered stretches follow at residues 1-50, 103-131, and 202-221; these read MSLA…LHGG, NYYP…STDD, and SSPQ…TTND. The transit peptide at 1-93 directs the protein to the mitochondrion; the sequence is MSLASLARAL…LANPQFRRLF (93 aa). Residues 108–127 are compositionally biased toward basic and acidic residues; it reads GKKEAPKGDGSNKSDSKQDS. 375–382 serves as a coordination point for ATP; that stretch reads GPPGTGKT. Residue His-600 participates in Zn(2+) binding. Glu-601 is a catalytic residue. The Zn(2+) site is built by His-604 and Asp-676. The tract at residues 781-822 is disordered; it reads PTNYDLFKQGFQDEEDSKNQEAAKTPQPDDDGTPSLGEVVPT.

This sequence in the N-terminal section; belongs to the AAA ATPase family. In the C-terminal section; belongs to the peptidase M41 family. It depends on Zn(2+) as a cofactor.

It is found in the mitochondrion. Probable ATP-dependent zinc metallopeptidase. The polypeptide is ATP-dependent zinc metalloprotease FTSH 8, mitochondrial (FTSH8) (Oryza sativa subsp. japonica (Rice)).